We begin with the raw amino-acid sequence, 251 residues long: Zinc import ATP-binding protein ZnuC (251 aa).

The ABC transporter domain occupies 5–220; it reads VSLENVSVSF…PEFISMFGPR (216 aa). Position 37–44 (37–44) interacts with ATP; the sequence is GPNGAGKS.

The protein belongs to the ABC transporter superfamily. Zinc importer (TC 3.A.1.15.5) family. The complex is composed of two ATP-binding proteins (ZnuC), two transmembrane proteins (ZnuB) and a solute-binding protein (ZnuA).

It localises to the cell inner membrane. The catalysed reaction is Zn(2+)(out) + ATP(in) + H2O(in) = Zn(2+)(in) + ADP(in) + phosphate(in) + H(+)(in). Functionally, part of the ABC transporter complex ZnuABC involved in zinc import. Responsible for energy coupling to the transport system. Seems to be important for the virulence. This Salmonella typhimurium (strain LT2 / SGSC1412 / ATCC 700720) protein is Zinc import ATP-binding protein ZnuC.